A 219-amino-acid polypeptide reads, in one-letter code: UPF0376 protein C36C5.12 (219 aa).

The Cytoplasmic portion of the chain corresponds to 1 to 20 (MGRLDVKNSWIEFHQDEMTS). Residues 21–43 (FLKLAIIGTVLLGVAHGANLTAA) form a helical; Signal-anchor for type II membrane protein membrane-spanning segment. Residues 44–219 (EKETYCELRS…VSKCDFSRLG (176 aa)) are Extracellular-facing. N-linked (GlcNAc...) asparagine glycosylation is found at Asn-104 and Asn-204.

It belongs to the UPF0376 family.

The protein resides in the membrane. The polypeptide is UPF0376 protein C36C5.12 (Caenorhabditis elegans).